Consider the following 154-residue polypeptide: Protein X (154 aa).

A mitochondrial targeting sequence region spans residues 68-117; sequence PCALRFTSARCMETTVNAHQILPKVLHKRTLGLPAMSTTDLEAYFKDCVF.

It belongs to the orthohepadnavirus protein X family. May form homodimer. May interact with host CEBPA, CFLAR, CREB1, DDB1, E4F1, HBXIP, HSPD1/HSP60, NFKBIA, POLR2E and SMAD4. Interacts with host SMC5-SMC6 complex and induces its degradation. Interacts with host TRPC4AP; leading to prevent ubiquitination of TRPC4AP. Interacts with host PLSCR1; this interaction promotes ubiquitination and degradation of HBx and impairs HBx-mediated cell proliferation. In terms of processing, a fraction may be phosphorylated in insect cells and HepG2 cells, a human hepatoblastoma cell line. Phosphorylated in vitro by host protein kinase C or mitogen-activated protein kinase. N-acetylated in insect cells.

It is found in the host cytoplasm. The protein localises to the host nucleus. It localises to the host mitochondrion. In terms of biological role, multifunctional protein that plays a role in silencing host antiviral defenses and promoting viral transcription. Does not seem to be essential for HBV infection. May be directly involved in development of cirrhosis and liver cancer (hepatocellular carcinoma). Most of cytosolic activities involve modulation of cytosolic calcium. The effect on apoptosis is controversial depending on the cell types in which the studies have been conducted. May induce apoptosis by localizing in mitochondria and causing loss of mitochondrial membrane potential. May also modulate apoptosis by binding host CFLAR, a key regulator of the death-inducing signaling complex (DISC). Promotes viral transcription by using the host E3 ubiquitin ligase DDB1 to target the SMC5-SMC6 complex to proteasomal degradation. This host complex would otherwise bind to viral episomal DNA, and prevents its transcription. Moderately stimulates transcription of many different viral and cellular transcription elements. Promoters and enhancers stimulated by HBx contain DNA binding sites for NF-kappa-B, AP-1, AP-2, c-EBP, ATF/CREB, or the calcium-activated factor NF-AT. In Homo sapiens (Human), this protein is Protein X.